The sequence spans 642 residues: Threonine--tRNA ligase (642 aa).

The TGS domain maps to 1 to 61; that stretch reads MPVITLPDGS…ETDAELSIIT (61 aa). The interval 243–534 is catalytic; that stretch reads DHRKIGKQLD…LIEEYAGRFP (292 aa). Positions 334, 385, and 511 each coordinate Zn(2+).

Belongs to the class-II aminoacyl-tRNA synthetase family. In terms of assembly, homodimer. The cofactor is Zn(2+).

It is found in the cytoplasm. The enzyme catalyses tRNA(Thr) + L-threonine + ATP = L-threonyl-tRNA(Thr) + AMP + diphosphate + H(+). In terms of biological role, catalyzes the attachment of threonine to tRNA(Thr) in a two-step reaction: L-threonine is first activated by ATP to form Thr-AMP and then transferred to the acceptor end of tRNA(Thr). Also edits incorrectly charged L-seryl-tRNA(Thr). The protein is Threonine--tRNA ligase of Shewanella sp. (strain W3-18-1).